The sequence spans 144 residues: Cystatin-F (144 aa).

A signal peptide spans 1–18; it reads MWLAILLALCCLTSDTHG. An N-linked (GlcNAc...) asparagine glycan is attached at asparagine 61. Residues 80–84 carry the Secondary area of contact motif; that stretch reads QVVKG. 2 disulfide bridges follow: cysteine 98-cysteine 109 and cysteine 123-cysteine 143.

It belongs to the cystatin family.

The protein resides in the secreted. Functionally, inhibits papain and cathepsin L but with affinities lower than other cystatins. May play a role in immune regulation through inhibition of a unique target in the hematopoietic system. The sequence is that of Cystatin-F (Cst7) from Mus musculus (Mouse).